The sequence spans 1883 residues: Lysophospholipase NTE1 (1883 aa).

Residues 1–75 (MSQVPVASPA…LLRVVLASLN (75 aa)) lie on the Cytoplasmic side of the membrane. A helical transmembrane segment spans residues 76–96 (LIRILATFSTITVPSLVYAIL). At 97-103 (HYSLTLQ) the chain is on the lumenal side. A helical membrane pass occupies residues 104-124 (LNFPSLALLFLTSLISAFIWL). The Cytoplasmic segment spans residues 125-1883 (RYRHLNKYER…AGISARRNSI (1759 aa)). Disordered regions lie at residues 284-327 (HLAP…FNPP), 355-410 (ERLG…LYHA), 618-693 (SQRS…MVGP), 716-764 (SAQP…RKGS), 921-1069 (EEDR…ATNS), and 1084-1108 (LHQQ…GKRS). Residues 311–327 (NNATAPTSPYSSAFNPP) show a composition bias toward polar residues. Residues 372-383 (ARTASSGTASAT) are compositionally biased toward low complexity. The span at 650–668 (PSLTTSSKQSNQKPTSSRI) shows a compositional bias: polar residues. A nucleoside 3',5'-cyclic phosphate-binding positions include 863–1158 (AGHG…RRPI) and 1166–1285 (RLLS…IARR). The span at 936–948 (TDASSGSSRQNRP) shows a compositional bias: polar residues. The span at 964–974 (LLDERNLREAD) shows a compositional bias: basic and acidic residues. Polar residues-rich tracts occupy residues 988–998 (ISSNGDGNSGS) and 1084–1100 (LHQQ…QSSQ). Residues 1544–1708 (LVLGGGGARG…VDNLPVTVML (165 aa)) form the PNPLA domain. A GXGXXG motif is present at residues 1548 to 1553 (GGGARG). The GXSXG motif lies at 1575–1579 (GTSIG). Serine 1577 serves as the catalytic Nucleophile. Aspartate 1695 (proton acceptor) is an active-site residue. The DGA/G motif lies at 1695 to 1697 (DGG). The interval 1852–1883 (DESGVGGGVRKIRKKRRRTRRKAGISARRNSI) is disordered. Residues 1861–1874 (RKIRKKRRRTRRKA) show a composition bias toward basic residues.

Belongs to the NTE family.

It is found in the endoplasmic reticulum membrane. The catalysed reaction is a 1-acyl-sn-glycero-3-phosphocholine + H2O = sn-glycerol 3-phosphocholine + a fatty acid + H(+). Inhibited by organophosphorus esters. Intracellular phospholipase B that catalyzes the double deacylation of phosphatidylcholine (PC) to glycerophosphocholine (GroPCho). Plays an important role in membrane lipid homeostasis. Responsible for the rapid PC turnover in response to inositol, elevated temperatures, or when choline is present in the growth medium. This Mycosarcoma maydis (Corn smut fungus) protein is Lysophospholipase NTE1 (NTE1).